A 100-amino-acid chain; its full sequence is Osteocalcin (100 aa).

A signal peptide spans 1–23 (MRALTLLALLALAALCIAGQAGA). A propeptide spanning residues 24-51 (KPSGAESSKGAAFVSKQEGSEVVKRPRR) is cleaved from the precursor. Residues 52-98 (YLYQWLGAPVPYPDTLEPRREVCELNPDCDELADHIGFQEAYRRFYG) form the Gla domain. The Ca(2+) site is built by glutamate 68, glutamate 72, glutamate 75, and aspartate 81. Glutamate 68, glutamate 72, and glutamate 75 each carry 4-carboxyglutamate. Cysteine 74 and cysteine 80 are oxidised to a cystine.

This sequence belongs to the osteocalcin/matrix Gla protein family. Gamma-carboxyglutamate residues are formed by vitamin K dependent carboxylation by GGCX. These residues are essential for the binding of calcium. Decarboxylation promotes the hormone activity.

It is found in the secreted. Functionally, the carboxylated form is one of the main organic components of the bone matrix, which constitutes 1-2% of the total bone protein: it acts as a negative regulator of bone formation and is required to limit bone formation without impairing bone resorption or mineralization. The carboxylated form binds strongly to apatite and calcium. In terms of biological role, the uncarboxylated form acts as a hormone secreted by osteoblasts, which regulates different cellular processes, such as energy metabolism, male fertility and brain development. Regulates of energy metabolism by acting as a hormone favoring pancreatic beta-cell proliferation, insulin secretion and sensitivity and energy expenditure. Uncarboxylated osteocalcin hormone also promotes testosterone production in the testes: acts as a ligand for G protein-coupled receptor GPRC6A at the surface of Leydig cells, initiating a signaling response that promotes the expression of enzymes required for testosterone synthesis in a CREB-dependent manner. Also acts as a regulator of brain development: osteocalcin hormone crosses the blood-brain barrier and acts as a ligand for GPR158 on neurons, initiating a signaling response that prevents neuronal apoptosis in the hippocampus, favors the synthesis of all monoamine neurotransmitters and inhibits that of gamma-aminobutyric acid (GABA). Osteocalcin also crosses the placenta during pregnancy and maternal osteocalcin is required for fetal brain development. This Pan troglodytes (Chimpanzee) protein is Osteocalcin.